A 408-amino-acid polypeptide reads, in one-letter code: UPF0761 membrane protein Avin_36810 (408 aa).

The next 6 membrane-spanning stretches (helical) occupy residues 33 to 53 (YTAL…LSVV), 92 to 112 (HLTW…LMTV), 132 to 152 (FLLH…GFAL), 174 to 194 (LLKV…YVAV), 209 to 229 (LFAA…VALF), and 238 to 258 (AFAA…IVLL).

It belongs to the UPF0761 family.

The protein localises to the cell inner membrane. This Azotobacter vinelandii (strain DJ / ATCC BAA-1303) protein is UPF0761 membrane protein Avin_36810.